The following is a 106-amino-acid chain: Ig kappa chain C region, B allele (106 aa).

Residues 5–102 (PTVSIFPPST…SSSPVVKSFN (98 aa)) enclose the Ig-like domain. A disulfide bond links Cys26 and Cys86.

The protein is Ig kappa chain C region, B allele of Rattus norvegicus (Rat).